We begin with the raw amino-acid sequence, 90 residues long: CRISPR-associated endonuclease Cas2 2 (90 aa).

Asp-11 is a binding site for Mg(2+).

This sequence belongs to the CRISPR-associated endoribonuclease Cas2 protein family. In terms of assembly, homodimer, forms a heterotetramer with a Cas1 homodimer. Mn(2+) is required as a cofactor. Requires Mg(2+) as cofactor.

Inhibited by EDTA and at pH 6.0. Its function is as follows. CRISPR (clustered regularly interspaced short palindromic repeat), is an adaptive immune system that provides protection against mobile genetic elements (viruses, transposable elements and conjugative plasmids). CRISPR clusters contain sequences complementary to antecedent mobile elements and target invading nucleic acids. CRISPR clusters are transcribed and processed into CRISPR RNA (crRNA). Involved in the integration of spacer DNA into the CRISPR cassette. Functions as a dsDNA endonuclease and as a weak ssRNase. In Thermus thermophilus (strain ATCC BAA-163 / DSM 7039 / HB27), this protein is CRISPR-associated endonuclease Cas2 2 (cas2b).